The following is a 687-amino-acid chain: Polyphosphate kinase (687 aa).

N45 contacts ATP. 2 residues coordinate Mg(2+): R375 and R405. The active-site Phosphohistidine intermediate is H435. 3 residues coordinate ATP: Y472, R568, and H596.

The protein belongs to the polyphosphate kinase 1 (PPK1) family. Mg(2+) is required as a cofactor. In terms of processing, an intermediate of this reaction is the autophosphorylated ppk in which a phosphate is covalently linked to a histidine residue through a N-P bond.

It carries out the reaction [phosphate](n) + ATP = [phosphate](n+1) + ADP. In terms of biological role, catalyzes the reversible transfer of the terminal phosphate of ATP to form a long-chain polyphosphate (polyP). The protein is Polyphosphate kinase of Burkholderia vietnamiensis (strain G4 / LMG 22486) (Burkholderia cepacia (strain R1808)).